We begin with the raw amino-acid sequence, 1141 residues long: Collagen alpha-1(XXVIII) chain (1141 aa).

Residues 1–20 (MRRRDVAFCLLLLPAFMTQA) form the signal peptide. The region spanning 48–227 (DVVFILDSSE…TLVDRIQERL (180 aa)) is the VWFA 1 domain. A disordered region spans residues 242 to 770 (CEKGEPGDPG…KQGLQGPKGD (529 aa)). 5 consecutive Collagen-like domains span residues 243–300 (EKGE…RGEC), 301–358 (GKPG…GAPG), 501–544 (GPKG…MPGK), 545–588 (GQPG…MPGA), and 733–769 (GQKG…GPKG). A compositionally biased stretch (basic and acidic residues) spans 291–311 (KGDKGERGECGKPGMKGDKGP). A compositionally biased stretch (low complexity) spans 335–344 (PKGFQGNKGE). Positions 345-356 (PGPPGPYGPPGA) are enriched in pro residues. A compositionally biased stretch (basic and acidic residues) spans 735-753 (KGEHGDRGDVGRKGEKGET). The VWFA 2 domain maps to 798–976 (ELVFVIDSSE…TLQDTLKQKL (179 aa)). In terms of domain architecture, BPTI/Kunitz inhibitor spans 1088–1138 (CEEALKPGECGDYVVRWYYDKQVNSCARFWFSGCNGSGNRFHSEKECRETC). 3 disulfide bridges follow: Cys-1088/Cys-1138, Cys-1097/Cys-1121, and Cys-1113/Cys-1134.

This sequence belongs to the VWA-containing collagen family. Trimer or homomer. Secreted into as a 135 kDa monomer under reducing conditions and as a homotrimer under non-reducing conditions. As to expression, expressed in skin, intestine, sternum, brain and kidney. Lower expression is also observed in heart, lung, sciatic nerve, dorsal root ganglia, peripheral nerves and calvaria of newborn mice and in intestine and brain of adult mice. Found in basement membrane surrounding a particular subset of Schwann cells in adult sciatic nerve.

It is found in the secreted. The protein resides in the extracellular space. It localises to the extracellular matrix. Its subcellular location is the basement membrane. Its function is as follows. May act as a cell-binding protein. This Mus musculus (Mouse) protein is Collagen alpha-1(XXVIII) chain (Col28a1).